We begin with the raw amino-acid sequence, 452 residues long: uncharacterized protein (452 aa).

An N-terminal signal peptide occupies residues 1–20; sequence MQFFGSLFVSLLGAAGLANA. The tract at residues 130–151 is disordered; the sequence is TQSSSNSTSTMNSTGSVSGGSV.

The protein localises to the endoplasmic reticulum. This is an uncharacterized protein from Schizosaccharomyces pombe (strain 972 / ATCC 24843) (Fission yeast).